Here is a 221-residue protein sequence, read N- to C-terminus: uncharacterized protein (221 aa).

Positions 1–22 (MGLDNFTAPSTGTTPAGSPFLR) are disordered. A compositionally biased stretch (polar residues) spans 7-16 (TAPSTGTTPA).

Belongs to the IIV-6 259R family.

This is an uncharacterized protein from Invertebrate iridescent virus 3 (IIV-3).